A 171-amino-acid polypeptide reads, in one-letter code: Shikimate kinase (171 aa).

Residue 14-19 (GAGKST) coordinates ATP. Residue Ser18 coordinates Mg(2+). Substrate contacts are provided by Asp36, Arg60, and Gly82. An ATP-binding site is contributed by Arg120. Residue Arg139 participates in substrate binding. Gln156 serves as a coordination point for ATP.

It belongs to the shikimate kinase family. In terms of assembly, monomer. It depends on Mg(2+) as a cofactor.

Its subcellular location is the cytoplasm. It carries out the reaction shikimate + ATP = 3-phosphoshikimate + ADP + H(+). It participates in metabolic intermediate biosynthesis; chorismate biosynthesis; chorismate from D-erythrose 4-phosphate and phosphoenolpyruvate: step 5/7. In terms of biological role, catalyzes the specific phosphorylation of the 3-hydroxyl group of shikimic acid using ATP as a cosubstrate. This chain is Shikimate kinase, found in Shewanella baltica (strain OS195).